A 194-amino-acid polypeptide reads, in one-letter code: Cysteine and glycine-rich protein 3 (194 aa).

Positions 1 to 5 are interaction with TCAP; the sequence is MPNWG. The LIM zinc-binding 1 domain maps to 10-61; that stretch reads CGACEKTVYHAEEIQCNGRSFHKTCFHCMACRKALDSTTVAAHESEIYCKVC. The short motif at 64–69 is the Nuclear localization signal element; sequence RRYGPK. Positions 94–105 are interaction with CLF2 and isoform 2; it reads QSPKPARSVTTS. Phosphoserine is present on residues S95 and S153. An LIM zinc-binding 2 domain is found at 120 to 171; it reads CPRCGKSVYAAEKVMGGGKPWHKTCFRCAICGKSLESTNVTDKDGELYCKVC.

In terms of assembly, self-associates. Oligomeric in the cytoplasm and monomeric in the nucleus. Homooligomers preferentially form along the actin cytoskeleton. Isoform 2 interacts with isoform 1. Isoform 1 but not isoform 2 interacts with MYOD1 and MYOG. Isoform 1 interacts with TCAP, ACTN2 and NRAP. Isoform 2 interacts with TCAP and alpha-actinin. Interacts with LDHD. Interacts (via N-terminus)with GLRX3 (via C-terminus) and PPP3CA; GLRX3 and calcineurin compete for interaction with CSRP3. Interacts with MYF6. Interacts with CFL2; the stoichiometry influences F-actin depolymerization and possibly two molecules of CFL2 can interact with one molecule of CSRP3 resulting in the highest functional impact; the interaction is stronger with phosphorylated CFL2. Phosphorylated by PKC/PRKCA. In terms of tissue distribution, cardiac and slow-twitch skeletal muscles. Isoform 2 is expressed in striated muscle. Isoform 2 is specifically expressed at higher levels in patients with neuromuscular diseases, such as limb-girdle muscular dystrophy 2A (LGMD2A), Duchenne muscular dystrophy (DMD) and dermatomyositis.

Its subcellular location is the nucleus. It localises to the cytoplasm. It is found in the cytoskeleton. The protein resides in the myofibril. The protein localises to the sarcomere. Its subcellular location is the z line. Its function is as follows. Positive regulator of myogenesis. Acts as a cofactor for myogenic bHLH transcription factors such as MYOD1, and probably MYOG and MYF6. Enhances the DNA-binding activity of the MYOD1:TCF3 isoform E47 complex and may promote formation of a functional MYOD1:TCF3 isoform E47:MEF2A complex involved in myogenesis. Plays a crucial and specific role in the organization of cytosolic structures in cardiomyocytes. Could play a role in mechanical stretch sensing. May be a scaffold protein that promotes the assembly of interacting proteins at Z-line structures. It is essential for calcineurin anchorage to the Z line. Required for stress-induced calcineurin-NFAT activation. The role in regulation of cytoskeleton dynamics by association with CFL2 is reported conflictingly: Shown to enhance CFL2-mediated F-actin depolymerization dependent on the CSRP3:CFL2 molecular ratio, and also shown to reduce the ability of CLF1 and CFL2 to enhance actin depolymerization. Proposed to contribute to the maintenance of muscle cell integrity through an actin-based mechanism. Can directly bind to actin filaments, cross-link actin filaments into bundles without polarity selectivity and protect them from dilution- and cofilin-mediated depolymerization; the function seems to involve its self-association. In vitro can inhibit PKC/PRKCA activity. Proposed to be involved in cardiac stress signaling by down-regulating excessive PKC/PRKCA signaling. In terms of biological role, may play a role in early sarcomere organization. Overexpression in myotubes negatively regulates myotube differentiation. By association with isoform 1 and thus changing the CSRP3 isoform 1:CFL2 stoichiometry is proposed to down-regulate CFL2-mediated F-actin depolymerization. In Homo sapiens (Human), this protein is Cysteine and glycine-rich protein 3 (CSRP3).